A 180-amino-acid polypeptide reads, in one-letter code: Large ribosomal subunit protein uL16 (180 aa).

Belongs to the universal ribosomal protein uL16 family.

The protein is Large ribosomal subunit protein uL16 of Thermococcus sibiricus (strain DSM 12597 / MM 739).